Here is a 136-residue protein sequence, read N- to C-terminus: Holo-[acyl-carrier-protein] synthase (136 aa).

The Mg(2+) site is built by D8 and E57.

Belongs to the P-Pant transferase superfamily. AcpS family. Mg(2+) is required as a cofactor.

It localises to the cytoplasm. It carries out the reaction apo-[ACP] + CoA = holo-[ACP] + adenosine 3',5'-bisphosphate + H(+). In terms of biological role, transfers the 4'-phosphopantetheine moiety from coenzyme A to a Ser of acyl-carrier-protein. In Methylorubrum populi (strain ATCC BAA-705 / NCIMB 13946 / BJ001) (Methylobacterium populi), this protein is Holo-[acyl-carrier-protein] synthase.